A 292-amino-acid chain; its full sequence is Acetyl-coenzyme A carboxylase carboxyl transferase subunit beta (292 aa).

A CoA carboxyltransferase N-terminal domain is found at 29–292 (LWVKCSECGQ…HGVKDLMGAN (264 aa)). Zn(2+)-binding residues include C33, C36, C52, and C55. The C4-type zinc finger occupies 33–55 (CSECGQVAYRKDLISNFNVCSNC).

Belongs to the AccD/PCCB family. In terms of assembly, acetyl-CoA carboxylase is a heterohexamer composed of biotin carboxyl carrier protein (AccB), biotin carboxylase (AccC) and two subunits each of ACCase subunit alpha (AccA) and ACCase subunit beta (AccD). Requires Zn(2+) as cofactor.

It localises to the cytoplasm. The enzyme catalyses N(6)-carboxybiotinyl-L-lysyl-[protein] + acetyl-CoA = N(6)-biotinyl-L-lysyl-[protein] + malonyl-CoA. The protein operates within lipid metabolism; malonyl-CoA biosynthesis; malonyl-CoA from acetyl-CoA: step 1/1. In terms of biological role, component of the acetyl coenzyme A carboxylase (ACC) complex. Biotin carboxylase (BC) catalyzes the carboxylation of biotin on its carrier protein (BCCP) and then the CO(2) group is transferred by the transcarboxylase to acetyl-CoA to form malonyl-CoA. This Prochlorococcus marinus (strain MIT 9515) protein is Acetyl-coenzyme A carboxylase carboxyl transferase subunit beta.